A 182-amino-acid polypeptide reads, in one-letter code: UPF0397 protein VS_II0189 (182 aa).

5 helical membrane-spanning segments follow: residues 8–28 (VVVIAIGAALYGIGGLPMFGV), 41–61 (AVLALFSVLFGPIVGFLVGFI), 72–92 (WGVWLTWVLGSGIVGMVIGLF), 110–130 (FALFVVLALAGNVVGYGSSAF), and 146–166 (QLSIIAAGNTILIAVVGFLIL).

This sequence belongs to the UPF0397 family.

Its subcellular location is the cell membrane. This chain is UPF0397 protein VS_II0189, found in Vibrio atlanticus (strain LGP32) (Vibrio splendidus (strain Mel32)).